The following is a 258-amino-acid chain: Isoprenyl transferase 2 (258 aa).

Residues 1–18 (MNFPPIHPSTPKMTPPDL) show a composition bias toward pro residues. The segment at 1-21 (MNFPPIHPSTPKMTPPDLDPQ) is disordered. Asp32 is an active-site residue. Asp32 is a binding site for Mg(2+). Substrate contacts are provided by residues 33-36 (GNGR), Trp37, Arg45, His49, and 77-79 (STE). The active-site Proton acceptor is Asn80. Substrate-binding positions include Trp81, Arg83, Arg200, and 206–208 (RLS). Glu219 is a binding site for Mg(2+).

This sequence belongs to the UPP synthase family. As to quaternary structure, homodimer. Mg(2+) serves as cofactor.

Functionally, catalyzes the condensation of isopentenyl diphosphate (IPP) with allylic pyrophosphates generating different type of terpenoids. This chain is Isoprenyl transferase 2, found in Nostoc sp. (strain PCC 7120 / SAG 25.82 / UTEX 2576).